A 64-amino-acid polypeptide reads, in one-letter code: MAVCQICGKKTAHGNRVAHSATTTKRTWKPNLQKVKAVLPDGTTKKIYVCAKCLKAGKVRKAVR.

This sequence belongs to the bacterial ribosomal protein bL28 family.

This is Large ribosomal subunit protein bL28 from Persephonella marina (strain DSM 14350 / EX-H1).